The primary structure comprises 325 residues: Protease HtpX homolog 2 (325 aa).

The next 2 helical transmembrane spans lie at 17-37 and 42-62; these read IAIL…FFGF and LLIT…WLFG. H146 lines the Zn(2+) pocket. Residue E147 is part of the active site. H150 is a Zn(2+) binding site. A run of 2 helical transmembrane segments spans residues 158-178 and 195-215; these read LLLA…GLWW and ILFL…LFVL. Position 222 (E222) interacts with Zn(2+).

The protein belongs to the peptidase M48B family. Zn(2+) is required as a cofactor.

Its subcellular location is the cell membrane. This Sulfurisphaera tokodaii (strain DSM 16993 / JCM 10545 / NBRC 100140 / 7) (Sulfolobus tokodaii) protein is Protease HtpX homolog 2.